The sequence spans 91 residues: Progonadoliberin-1 (91 aa).

The signal sequence occupies residues M1–C21. The residue at position 22 (Q22) is a Pyrrolidone carboxylic acid. Position 31 is a glycine amide (G31).

This sequence belongs to the GnRH family. Expressed in the cell bodies of a cluster of neurons in the preoptic region.

The protein resides in the secreted. Functionally, stimulates the secretion of gonadotropins. The polypeptide is Progonadoliberin-1 (gnrh1) (Oryzias latipes (Japanese rice fish)).